We begin with the raw amino-acid sequence, 338 residues long: Activator of 90 kDa heat shock protein ATPase homolog 1 (338 aa).

N6-acetyllysine is present on lysine 3. Residue lysine 182 forms a Glycyl lysine isopeptide (Lys-Gly) (interchain with G-Cter in SUMO1) linkage. Phosphoserine is present on serine 193. Lysine 203 participates in a covalent cross-link: Glycyl lysine isopeptide (Lys-Gly) (interchain with G-Cter in SUMO2). Lysine 212 carries the N6-acetyllysine modification. Tyrosine 223 carries the post-translational modification Phosphotyrosine; by ABL.

This sequence belongs to the AHA1 family. Interacts with HSPCA/HSP90. Interacts with HSP90AA1; the interaction activates HSP90AA1 ATPase activity. Interacts with HSP90AB1. Interacts with GCH1. Interacts with SRPK1. Interacts with FLCN. Phosphorylation at Tyr-223 enhances binding to chaperone HSP90AA1.

It is found in the cytoplasm. It localises to the cytosol. The protein resides in the endoplasmic reticulum. In terms of biological role, acts as a co-chaperone of HSP90AA1. Activates the ATPase activity of HSP90AA1 leading to increase in its chaperone activity. Competes with the inhibitory co-chaperone FNIP1 for binding to HSP90AA1, thereby providing a reciprocal regulatory mechanism for chaperoning of client proteins. Competes with the inhibitory co-chaperone TSC1 for binding to HSP90AA1, thereby providing a reciprocal regulatory mechanism for chaperoning of client proteins. The polypeptide is Activator of 90 kDa heat shock protein ATPase homolog 1 (Ahsa1) (Mus musculus (Mouse)).